The sequence spans 576 residues: Cyclic nucleotide-binding domain-containing protein 2 (576 aa).

A nucleoside 3',5'-cyclic phosphate is bound at residue 116-239; that stretch reads SYRNYAEPLQ…DAQYRFEFFR (124 aa).

The protein localises to the cytoplasm. It localises to the cytosol. Its function is as follows. Essential for male fertility. Plays an important role in spermatogenesis and regulates sperm motility by controlling the development of the flagellar bending of sperm. This chain is Cyclic nucleotide-binding domain-containing protein 2 (CNBD2), found in Homo sapiens (Human).